Here is a 954-residue protein sequence, read N- to C-terminus: Glycine dehydrogenase (decarboxylating) (954 aa).

K699 is subject to N6-(pyridoxal phosphate)lysine.

Belongs to the GcvP family. The glycine cleavage system is composed of four proteins: P, T, L and H. It depends on pyridoxal 5'-phosphate as a cofactor.

It catalyses the reaction N(6)-[(R)-lipoyl]-L-lysyl-[glycine-cleavage complex H protein] + glycine + H(+) = N(6)-[(R)-S(8)-aminomethyldihydrolipoyl]-L-lysyl-[glycine-cleavage complex H protein] + CO2. Its function is as follows. The glycine cleavage system catalyzes the degradation of glycine. The P protein binds the alpha-amino group of glycine through its pyridoxal phosphate cofactor; CO(2) is released and the remaining methylamine moiety is then transferred to the lipoamide cofactor of the H protein. The sequence is that of Glycine dehydrogenase (decarboxylating) from Nitrobacter winogradskyi (strain ATCC 25391 / DSM 10237 / CIP 104748 / NCIMB 11846 / Nb-255).